We begin with the raw amino-acid sequence, 264 residues long: 3-methyl-2-oxobutanoate hydroxymethyltransferase (264 aa).

Mg(2+) is bound by residues aspartate 45 and aspartate 84. Residues 45–46 (DS), aspartate 84, and lysine 112 contribute to the 3-methyl-2-oxobutanoate site. Residue glutamate 114 coordinates Mg(2+). Glutamate 181 serves as the catalytic Proton acceptor.

Belongs to the PanB family. In terms of assembly, homodecamer; pentamer of dimers. The cofactor is Mg(2+).

The protein resides in the cytoplasm. The enzyme catalyses 3-methyl-2-oxobutanoate + (6R)-5,10-methylene-5,6,7,8-tetrahydrofolate + H2O = 2-dehydropantoate + (6S)-5,6,7,8-tetrahydrofolate. Its pathway is cofactor biosynthesis; (R)-pantothenate biosynthesis; (R)-pantoate from 3-methyl-2-oxobutanoate: step 1/2. Functionally, catalyzes the reversible reaction in which hydroxymethyl group from 5,10-methylenetetrahydrofolate is transferred onto alpha-ketoisovalerate to form ketopantoate. The protein is 3-methyl-2-oxobutanoate hydroxymethyltransferase of Colwellia psychrerythraea (strain 34H / ATCC BAA-681) (Vibrio psychroerythus).